A 178-amino-acid chain; its full sequence is Alkyl hydroperoxide reductase AhpD (178 aa).

The active-site Proton donor is C130. A disulfide bridge links C130 with C133. C133 (cysteine sulfenic acid (-SOH) intermediate) is an active-site residue.

The protein belongs to the AhpD family. Homotrimer.

The enzyme catalyses N(6)-[(R)-dihydrolipoyl]-L-lysyl-[lipoyl-carrier protein] + a hydroperoxide = N(6)-[(R)-lipoyl]-L-lysyl-[lipoyl-carrier protein] + an alcohol + H2O. Functionally, antioxidant protein with alkyl hydroperoxidase activity. Required for the reduction of the AhpC active site cysteine residues and for the regeneration of the AhpC enzyme activity. This is Alkyl hydroperoxide reductase AhpD from Mycolicibacterium paratuberculosis (strain ATCC BAA-968 / K-10) (Mycobacterium paratuberculosis).